We begin with the raw amino-acid sequence, 285 residues long: N(G),N(G)-dimethylarginine dimethylaminohydrolase 1 (285 aa).

Ala2 carries the N-acetylalanine modification. Substrate-binding positions include Leu30, Asp73, 78-79 (ED), Arg98, and Arg145. His173 functions as the Proton donor in the catalytic mechanism. At Cys222 the chain carries S-nitrosocysteine. Substrate is bound at residue Val268. An S-nitrosocysteine modification is found at Cys274. The Nucleophile role is filled by Cys274. A Zn(2+)-binding site is contributed by Cys274.

This sequence belongs to the DDAH family. In terms of assembly, monomer. Detected in brain, liver, kidney and pancreas, and at low levels in skeletal muscle.

The catalysed reaction is N(omega),N(omega)-dimethyl-L-arginine + H2O = dimethylamine + L-citrulline. The enzyme catalyses N(omega)-methyl-L-arginine + H2O = L-citrulline + methylamine. Inhibited by zinc ions. Enzyme purified in the absence of 1,10-phenanthroline contains on average 0.4 zinc atoms per subunit. Inhibited by 4-hydroxy-nonenal through the formation of a covalent adduct with His-173. Competitively inhibited by N(5)-iminopropyl-ornithine. Functionally, hydrolyzes N(G),N(G)-dimethyl-L-arginine (ADMA) and N(G)-monomethyl-L-arginine (MMA) which act as inhibitors of NOS. Has therefore a role in the regulation of nitric oxide generation. The protein is N(G),N(G)-dimethylarginine dimethylaminohydrolase 1 of Homo sapiens (Human).